A 261-amino-acid chain; its full sequence is 4-hydroxy-tetrahydrodipicolinate reductase (261 aa).

Position 9–14 (Gly-9–Met-14) interacts with NAD(+). An NADP(+)-binding site is contributed by Arg-36. NAD(+) contacts are provided by residues Gly-97 to Thr-99 and Ser-118 to Met-121. His-151 acts as the Proton donor/acceptor in catalysis. His-152 provides a ligand contact to (S)-2,3,4,5-tetrahydrodipicolinate. Lys-155 (proton donor) is an active-site residue. Gly-161–Thr-162 is a binding site for (S)-2,3,4,5-tetrahydrodipicolinate.

It belongs to the DapB family.

The protein localises to the cytoplasm. The catalysed reaction is (S)-2,3,4,5-tetrahydrodipicolinate + NAD(+) + H2O = (2S,4S)-4-hydroxy-2,3,4,5-tetrahydrodipicolinate + NADH + H(+). The enzyme catalyses (S)-2,3,4,5-tetrahydrodipicolinate + NADP(+) + H2O = (2S,4S)-4-hydroxy-2,3,4,5-tetrahydrodipicolinate + NADPH + H(+). The protein operates within amino-acid biosynthesis; L-lysine biosynthesis via DAP pathway; (S)-tetrahydrodipicolinate from L-aspartate: step 4/4. Catalyzes the conversion of 4-hydroxy-tetrahydrodipicolinate (HTPA) to tetrahydrodipicolinate. The protein is 4-hydroxy-tetrahydrodipicolinate reductase of Wolbachia sp. subsp. Drosophila simulans (strain wRi).